Consider the following 546-residue polypeptide: Phosphomethylpyrimidine synthase (546 aa).

Substrate is bound by residues N145, M174, Y203, H239, 259-261 (SRG), 300-303 (DGLR), and E339. Residue H343 participates in Zn(2+) binding. Substrate is bound at residue Y366. H407 provides a ligand contact to Zn(2+). Residues C487, C490, and C495 each coordinate [4Fe-4S] cluster.

Belongs to the ThiC family. [4Fe-4S] cluster serves as cofactor.

The enzyme catalyses 5-amino-1-(5-phospho-beta-D-ribosyl)imidazole + S-adenosyl-L-methionine = 4-amino-2-methyl-5-(phosphooxymethyl)pyrimidine + CO + 5'-deoxyadenosine + formate + L-methionine + 3 H(+). The protein operates within cofactor biosynthesis; thiamine diphosphate biosynthesis. In terms of biological role, catalyzes the synthesis of the hydroxymethylpyrimidine phosphate (HMP-P) moiety of thiamine from aminoimidazole ribotide (AIR) in a radical S-adenosyl-L-methionine (SAM)-dependent reaction. In Mycobacterium ulcerans (strain Agy99), this protein is Phosphomethylpyrimidine synthase.